The sequence spans 278 residues: MNVWQAAVLGIVQGTTEFLPISSSAHLIVLPWLFDWPEPGLAFNVALHLGTLSAVLAYFWRDLIQIGRAWFAGLIRLRPLEDSASRLGWAVIIGSLPAGLAGFFLNDVIDHFFHSGGGGDTAIVFTSLLLIVLGFVLWLAERYGTRWRSLGELGLRDGLVVGLAQALALLPGVSRSGSTITASLFLGFARPAAARFSFILGIPAIAGAGLLETLKLVETGLPAEQRVLFVTGVASAAITGFLAIAFLLRFLQRYSTSIFIVYRIALGLVLLLVVSFAR.

8 helical membrane passes run 14 to 34, 40 to 60, 89 to 109, 121 to 141, 153 to 173, 196 to 216, 227 to 247, and 257 to 277; these read GTTEFLPISSSAHLIVLPWLF, GLAFNVALHLGTLSAVLAYFW, WAVIIGSLPAGLAGFFLNDVI, TAIVFTSLLLIVLGFVLWLAE, LGLRDGLVVGLAQALALLPGV, FSFILGIPAIAGAGLLETLKL, VLFVTGVASAAITGFLAIAFL, and SIFIVYRIALGLVLLLVVSFA.

Belongs to the UppP family.

It localises to the cell membrane. It carries out the reaction di-trans,octa-cis-undecaprenyl diphosphate + H2O = di-trans,octa-cis-undecaprenyl phosphate + phosphate + H(+). Functionally, catalyzes the dephosphorylation of undecaprenyl diphosphate (UPP). Confers resistance to bacitracin. The polypeptide is Undecaprenyl-diphosphatase (Thermomicrobium roseum (strain ATCC 27502 / DSM 5159 / P-2)).